A 467-amino-acid polypeptide reads, in one-letter code: L-seryl-tRNA(Sec) selenium transferase (467 aa).

An N6-(pyridoxal phosphate)lysine modification is found at lysine 298.

It belongs to the SelA family. Pyridoxal 5'-phosphate serves as cofactor.

The protein localises to the cytoplasm. It catalyses the reaction L-seryl-tRNA(Sec) + selenophosphate + H(+) = L-selenocysteinyl-tRNA(Sec) + phosphate. It participates in aminoacyl-tRNA biosynthesis; selenocysteinyl-tRNA(Sec) biosynthesis; selenocysteinyl-tRNA(Sec) from L-seryl-tRNA(Sec) (bacterial route): step 1/1. Converts seryl-tRNA(Sec) to selenocysteinyl-tRNA(Sec) required for selenoprotein biosynthesis. This is L-seryl-tRNA(Sec) selenium transferase from Alkaliphilus oremlandii (strain OhILAs) (Clostridium oremlandii (strain OhILAs)).